A 457-amino-acid chain; its full sequence is Streptogrisin-C (457 aa).

Residues 1–34 (MERTTLRRRALVAGTATVAVGALALAGLTGVASA) constitute a signal peptide (tat-type signal). A propeptide spanning residues 35-202 (DPAATAAPPV…ARSAEQPRAL (168 aa)) is cleaved from the precursor. The segment at 203–393 (ADIRGGDAYY…QAYGLTLVTS (191 aa)) is catalytic. Cysteines 219 and 239 form a disulfide. Catalysis depends on charge relay system residues H238 and D266. 2 disulfide bridges follow: C305–C315 and C341–C368. The Charge relay system role is filled by S347. The tract at residues 393–412 (SGGGTPTDPPTTPPTDSPGG) is disordered. The interval 394–413 (GGGTPTDPPTTPPTDSPGGT) is linker. The segment covering 399–408 (TDPPTTPPTD) has biased composition (pro residues). In terms of domain architecture, Chitin-binding type-3 spans 415–457 (AVGTAYAAGATVTYGGATYRCLQAHTAQPGWTPADVPALWQRV).

It belongs to the peptidase S1 family. Monomer. Post-translationally, predicted to be exported by the Tat system. The position of the signal peptide cleavage has not been experimentally proven.

Hydrolysis of proteins with specificity similar to chymotrypsin. May be specialized for the degradation of chitin-linked proteins. Has a primary specificity for large aliphatic or aromatic amino acids. The protein is Streptogrisin-C (sprC) of Streptomyces griseus.